Consider the following 161-residue polypeptide: Protein UXT homolog (161 aa).

It belongs to the UXT family.

The protein is Protein UXT homolog of Dictyostelium discoideum (Social amoeba).